The chain runs to 204 residues: Recombination protein RecR (204 aa).

Residues 63–78 form a C4-type zinc finger; sequence CRICCNVADSELCPIC. The region spanning 86-181 is the Toprim domain; that stretch reads NKICVVEQPQ…KVTRLARGLP (96 aa).

It belongs to the RecR family.

Functionally, may play a role in DNA repair. It seems to be involved in an RecBC-independent recombinational process of DNA repair. It may act with RecF and RecO. This Dehalococcoides mccartyi (strain ATCC BAA-2100 / JCM 16839 / KCTC 5957 / BAV1) protein is Recombination protein RecR.